A 509-amino-acid chain; its full sequence is MSKKPVVLMILDGFGLTNKVDGNAVSAANKPNLDNILKKYPHTQLGASGMDVGLPEGQMGNSEVGHLNIGAGRIVYQALTKITKSISDGDFFENVALNKAIENAKKNNSTLHLLGLLSPGGVHSHIDHLKGLIKLAKEKDIKKVYIHAFLDGRDVAPSSAKEYIEDIEIYMQEIGVGEIATISGRYYAMDRDKRWERVQLCYNAIVLGKGEEANSAVEGLEKSYRDNKTDEFVLPSVVLKEGKPKAKIENKDSVVFFNFRPDRARELTRAINDKVFDGFERETLDLTYVTMTEYDSTLENVEVAFPPEHLNNTLGEYVSKNGKKQLRIAETEKYAHVTFFFNGGVEEPNEGEDRVLIPSPKVATYDMQPEMNAYEVTDKLLERLDEDKYDMVILNFANPDMVGHTGVFEAAKKAIETVDECVGKIVNKVLEKDGTAFITADHGNSEEMIDYSTGKPMTAHTTNPVPFMYVSNDSKELREGGKLADIAPTMLQLMNLPKPSEMTGNSLIK.

Residues Asp-12 and Ser-62 each coordinate Mn(2+). Ser-62 serves as the catalytic Phosphoserine intermediate. Residues His-123, 153–154 (RD), Arg-185, Arg-191, 260–263 (RPDR), and Lys-333 contribute to the substrate site. Mn(2+) contacts are provided by Asp-400, His-404, Asp-441, His-442, and His-460.

Belongs to the BPG-independent phosphoglycerate mutase family. As to quaternary structure, monomer. It depends on Mn(2+) as a cofactor.

It carries out the reaction (2R)-2-phosphoglycerate = (2R)-3-phosphoglycerate. It functions in the pathway carbohydrate degradation; glycolysis; pyruvate from D-glyceraldehyde 3-phosphate: step 3/5. Catalyzes the interconversion of 2-phosphoglycerate and 3-phosphoglycerate. This chain is 2,3-bisphosphoglycerate-independent phosphoglycerate mutase, found in Clostridium botulinum (strain Langeland / NCTC 10281 / Type F).